The chain runs to 117 residues: Large ribosomal subunit protein bL20c (117 aa).

This sequence belongs to the bacterial ribosomal protein bL20 family.

It is found in the plastid. It localises to the chloroplast. Its function is as follows. Binds directly to 23S ribosomal RNA and is necessary for the in vitro assembly process of the 50S ribosomal subunit. It is not involved in the protein synthesizing functions of that subunit. This chain is Large ribosomal subunit protein bL20c, found in Lobularia maritima (Sweet alyssum).